A 347-amino-acid polypeptide reads, in one-letter code: 3-methyl-2-oxobutanoate hydroxymethyltransferase 1, mitochondrial (347 aa).

The transit peptide at Met1–Arg48 directs the protein to the mitochondrion. Mg(2+)-binding residues include Asp83 and Asp122. Residues Asp83 to Ser84, Asp122, and Lys152 each bind 3-methyl-2-oxobutanoate. Glu154 is a binding site for Mg(2+). Glu222 serves as the catalytic Proton acceptor.

It belongs to the PanB family. Requires Mg(2+) as cofactor.

The protein resides in the mitochondrion. It catalyses the reaction 3-methyl-2-oxobutanoate + (6R)-5,10-methylene-5,6,7,8-tetrahydrofolate + H2O = 2-dehydropantoate + (6S)-5,6,7,8-tetrahydrofolate. The protein operates within cofactor biosynthesis; (R)-pantothenate biosynthesis; (R)-pantoate from 3-methyl-2-oxobutanoate: step 1/2. In terms of biological role, catalyzes the reversible reaction in which hydroxymethyl group from 5,10-methylenetetrahydrofolate is transferred onto alpha-ketoisovalerate to form ketopantoate. The protein is 3-methyl-2-oxobutanoate hydroxymethyltransferase 1, mitochondrial (KPHMT1) of Arabidopsis thaliana (Mouse-ear cress).